The primary structure comprises 1237 residues: Tyrosine-protein kinase sid-3 (1237 aa).

The Protein kinase domain maps to 107-369; it reads IKLYELIGEG…REDLVAAMFL (263 aa). ATP is bound by residues 113–121 and lysine 139; that span reads IGEGSFAVV. Aspartate 230 (proton acceptor) is an active-site residue. The 61-residue stretch at 366–426 folds into the SH3 domain; sequence AMFLDAVARE…PRSVVFAQTN (61 aa). Disordered regions lie at residues 683 to 704, 741 to 802, 826 to 919, 940 to 986, 999 to 1018, and 1134 to 1156; these read NQGS…GIQN, PPAP…APVQ, IQPQ…EERR, SNST…SEPI, SATT…PSPP, and QQRQ…SAAS. Polar residues-rich tracts occupy residues 749-766, 778-791, and 847-863; these read QPVS…TLQK, KRPT…SNGF, and SAPT…SQAS. Low complexity-rich tracts occupy residues 881-910 and 940-961; these read TPIT…TSTT and SNST…PSTA. Positions 1138–1156 are enriched in low complexity; it reads AGSSSRAVPPASASTSAAS.

It belongs to the protein kinase superfamily. Tyr protein kinase family. SYK/ZAP-70 subfamily. As to expression, ubiquitously present in all tissues tested. Expressed in the somatic cells of gut, pharynx, body wall muscle, neurons, skin and excretory canal cells.

It is found in the cytoplasm. The enzyme catalyses L-tyrosyl-[protein] + ATP = O-phospho-L-tyrosyl-[protein] + ADP + H(+). Functionally, tyrosine-protein kinase which plays a role in RNA-mediated gene silencing by mediating import of double-stranded RNA (dsRNA) into cells. Not required for import of ingested dsRNA into intestinal cells but involved in subsequent export from intestinal cells to internal tissues. In Caenorhabditis elegans, this protein is Tyrosine-protein kinase sid-3 (sid-3).